The sequence spans 70 residues: Alpha-elapitoxin-Ast2a (70 aa).

Disulfide bonds link Cys-3/Cys-20, Cys-13/Cys-41, Cys-26/Cys-30, Cys-45/Cys-56, and Cys-57/Cys-62. Ser-70 carries the post-translational modification Serine amide.

The protein belongs to the three-finger toxin family. Long-chain subfamily. Type II alpha-neurotoxin sub-subfamily. As to expression, expressed by the venom gland.

The protein localises to the secreted. Binds with high affinity to muscular (alpha-1/CHRNA1) and neuronal (alpha-7/CHRNA7) nicotinic acetylcholine receptor (nAChR) and inhibits acetylcholine from binding to the receptor, thereby impairing neuromuscular and neuronal transmission. This chain is Alpha-elapitoxin-Ast2a, found in Hydrophis stokesii (Stokes's sea snake).